The sequence spans 574 residues: Membrane protein insertase YidC (574 aa).

The next 6 helical transmembrane spans lie at 6–26 (VFLI…WGKD), 356–376 (FSIM…LHSF), 380–400 (WGWA…PLSA), 447–467 (GGCL…WVLV), 489–509 (PYFI…KLTP), and 525–545 (PLVF…YWVV).

The protein belongs to the OXA1/ALB3/YidC family. Type 1 subfamily. Interacts with the Sec translocase complex via SecD. Specifically interacts with transmembrane segments of nascent integral membrane proteins during membrane integration.

The protein resides in the cell inner membrane. Its function is as follows. Required for the insertion and/or proper folding and/or complex formation of integral membrane proteins into the membrane. Involved in integration of membrane proteins that insert both dependently and independently of the Sec translocase complex, as well as at least some lipoproteins. Aids folding of multispanning membrane proteins. The sequence is that of Membrane protein insertase YidC from Xanthomonas axonopodis pv. citri (strain 306).